The chain runs to 287 residues: Outer membrane protein TP0453 (287 aa).

Positions 1 to 24 are cleaved as a signal peptide; sequence MIRRRYRGCTQGAWIVSVGMLFAS. The N-palmitoyl cysteine moiety is linked to residue C25. C25 carries the S-diacylglycerol cysteine lipid modification. Amphipathic helix stretches follow at residues 36-40, 56-63, 69-77, 103-112, 155-162, 172-179, 194-202, 240-250, and 270-279; these read PLGVV, ENLISRII, KADIKKIVD, YAFTNLIFSR, MSKMLSRL, PRFEKECT, GGHFITKLL, FPIQFLISRVL, and AERLASVISS.

A mix of monomer and dimers; may integrate into the membrane as a dimer. Post-translationally, palmitoylated upon expression of a fusion protein with first 46 residues fused to PhoA in E.coli.

The protein resides in the cell outer membrane. Its function is as follows. Might be involved in ligand transport, alters membrane permeability at acidic pH (4.0 to 5.5). Incubation of the non-lipidated form with lipid vesicles increases their permeability. The chain is Outer membrane protein TP0453 from Treponema pallidum (strain Nichols).